Consider the following 377-residue polypeptide: MPEEKVATKKIKLSALCELCNGRKAVMKRPKNLQKLCKECFYNVFETEIHNTIADANLFQPGDKVAIGASGGKDSTVLASVLKTLNERYDYRLELVLLSIDEGIKGYRDDSLATVKRNQAQYNMALEIISYKDLYNWSMDEIVSCAGIRSSCTYCGVLRRQALDRGAAKLGINHVVTGHNADDMAETVLMNLLRGDTARLEKSCTILTQSTGSPIKRSKPFKYSYQKEIVLYAHYKKLDYFSTECSYAPEAFRGTARELLKSLEAIRPSCIMDIIYSGEHLALAPKKKRTQQYKNKKKTQVDNEHEINADGSITIGTREFKDGNRCENCGYLTSNKICKACVLLAGLEMNRAKVSVDNNTAVDGAAKLTKTLEQLSF.

This sequence belongs to the TtcA family. CTU1/NCS6/ATPBD3 subfamily.

Its subcellular location is the cytoplasm. It participates in tRNA modification; 5-methoxycarbonylmethyl-2-thiouridine-tRNA biosynthesis. Plays a central role in 2-thiolation of mcm(5)S(2)U at tRNA wobble positions of tRNA(Lys), tRNA(Glu) and tRNA(Gln). Directly binds tRNAs and probably acts by catalyzing adenylation of tRNAs, an intermediate required for 2-thiolation. It is unclear whether it acts as a sulfurtransferase that transfers sulfur from thiocarboxylated URM1 onto the uridine of tRNAs at wobble position. Prior mcm(5) tRNA modification by the elongator complex is required for 2-thiolation. May also be involved in protein urmylation. The protein is Cytoplasmic tRNA 2-thiolation protein 1 of Debaryomyces hansenii (strain ATCC 36239 / CBS 767 / BCRC 21394 / JCM 1990 / NBRC 0083 / IGC 2968) (Yeast).